The following is a 495-amino-acid chain: UDP-glycosyltransferase 73C10 (495 aa).

Residue His24 is the Proton acceptor of the active site. His24 is an an anthocyanidin binding site. Asp129 acts as the Charge relay in catalysis. Residues Gln358, His373, Trp376, Asn377, Ser378, and Glu381 each contribute to the UDP-alpha-D-glucose site. Residue Gly396 coordinates an anthocyanidin. The UDP-alpha-D-glucose site is built by Asp397 and Gln398.

The protein belongs to the UDP-glycosyltransferase family.

It catalyses the reaction oleanolate + UDP-alpha-D-glucose = oleanolate 3-O-beta-D-glucoside + UDP + H(+). Catalyzes the transfer of a glucose (Glc) moiety from UDP-Glc to the C-3 position of the oleanane sapogenins oleanolate and hederagenin, and to the C-28 carboxylic group of the lupane sapogenin betulinate. The monoglucosylated hederagenin 3-O-beta-D-glucoside is a feeding deterrent of the yellow-striped flea beetle (Phyllotreta nemorum). The protein is UDP-glycosyltransferase 73C10 of Barbarea vulgaris (Yellow rocket).